The chain runs to 96 residues: Co-chaperonin GroES (96 aa).

It belongs to the GroES chaperonin family. Heptamer of 7 subunits arranged in a ring. Interacts with the chaperonin GroEL.

It localises to the cytoplasm. Functionally, together with the chaperonin GroEL, plays an essential role in assisting protein folding. The GroEL-GroES system forms a nano-cage that allows encapsulation of the non-native substrate proteins and provides a physical environment optimized to promote and accelerate protein folding. GroES binds to the apical surface of the GroEL ring, thereby capping the opening of the GroEL channel. In Methylobacillus flagellatus (strain ATCC 51484 / DSM 6875 / VKM B-1610 / KT), this protein is Co-chaperonin GroES.